An 845-amino-acid polypeptide reads, in one-letter code: Protein arginine N-methyltransferase 9 (845 aa).

TPR repeat units follow at residues 25 to 58, 67 to 100, and 101 to 134; these read VSRS…APEL, QYTL…FPDD, and EVIC…NPDF. SAM-dependent MTase PRMT-type domains follow at residues 137 to 466 and 530 to 845; these read AKEN…YLRI and NIPY…TVKQ.

The protein belongs to the class I-like SAM-binding methyltransferase superfamily. Protein arginine N-methyltransferase family. In terms of assembly, found in a complex with PRMT9, SF3B2 and SF3B4. Interacts with SF3B2.

It localises to the cytoplasm. The catalysed reaction is L-arginyl-[protein] + 2 S-adenosyl-L-methionine = N(omega),N(omega)'-dimethyl-L-arginyl-[protein] + 2 S-adenosyl-L-homocysteine + 2 H(+). In terms of biological role, arginine methyltransferase that can both catalyze the formation of omega-N monomethylarginine (MMA) and symmetrical dimethylarginine (sDMA). Specifically mediates the symmetrical dimethylation of SF3B2. Involved in the regulation of alternative splicing of pre-mRNA. The protein is Protein arginine N-methyltransferase 9 of Homo sapiens (Human).